Here is a 544-residue protein sequence, read N- to C-terminus: Probable acyl-activating enzyme 8 (544 aa).

The protein belongs to the ATP-dependent AMP-binding enzyme family. Expressed at low levels in roots, leaves, stems, flowers and developing seeds.

Its function is as follows. May act as an acid--thiol ligase that activates carboxylic acids by forming acyl-CoAs. The protein is Probable acyl-activating enzyme 8 (AAE8) of Arabidopsis thaliana (Mouse-ear cress).